The sequence spans 307 residues: Methionyl-tRNA formyltransferase (307 aa).

108–111 (SLLP) lines the (6S)-5,6,7,8-tetrahydrofolate pocket.

This sequence belongs to the Fmt family.

The catalysed reaction is L-methionyl-tRNA(fMet) + (6R)-10-formyltetrahydrofolate = N-formyl-L-methionyl-tRNA(fMet) + (6S)-5,6,7,8-tetrahydrofolate + H(+). In terms of biological role, attaches a formyl group to the free amino group of methionyl-tRNA(fMet). The formyl group appears to play a dual role in the initiator identity of N-formylmethionyl-tRNA by promoting its recognition by IF2 and preventing the misappropriation of this tRNA by the elongation apparatus. The polypeptide is Methionyl-tRNA formyltransferase (Xanthomonas oryzae pv. oryzae (strain MAFF 311018)).